Consider the following 60-residue polypeptide: MPFVKIDLFEGRSQEQKNELAREVTEVVSRIAKAPKENIHVFINDMPEGTYYPQGELKKK.

Pro2 acts as the Proton acceptor; via imino nitrogen in catalysis.

This sequence belongs to the 4-oxalocrotonate tautomerase family.

The sequence is that of Probable tautomerase SAG1079 from Streptococcus agalactiae serotype V (strain ATCC BAA-611 / 2603 V/R).